The chain runs to 274 residues: Large ribosomal subunit protein uL2 (274 aa).

Positions 224-256 are disordered; that stretch reads AMNPIDHPHGGGEGRTGEGRHAVDPWGNLTKGY. The segment covering 229-246 has biased composition (basic and acidic residues); the sequence is DHPHGGGEGRTGEGRHAV.

This sequence belongs to the universal ribosomal protein uL2 family. Part of the 50S ribosomal subunit. Forms a bridge to the 30S subunit in the 70S ribosome.

In terms of biological role, one of the primary rRNA binding proteins. Required for association of the 30S and 50S subunits to form the 70S ribosome, for tRNA binding and peptide bond formation. It has been suggested to have peptidyltransferase activity; this is somewhat controversial. Makes several contacts with the 16S rRNA in the 70S ribosome. This chain is Large ribosomal subunit protein uL2, found in Acidovorax ebreus (strain TPSY) (Diaphorobacter sp. (strain TPSY)).